The primary structure comprises 74 residues: UPF0057 membrane protein At4g30660 (74 aa).

2 consecutive transmembrane segments (helical) span residues 4-24 and 37-57; these read NCEI…GVCF and LVLT…VIVF.

The protein belongs to the UPF0057 (PMP3) family.

Its subcellular location is the membrane. The polypeptide is UPF0057 membrane protein At4g30660 (Arabidopsis thaliana (Mouse-ear cress)).